The chain runs to 88 residues: Small ribosomal subunit protein bS16 (88 aa).

Belongs to the bacterial ribosomal protein bS16 family.

In Anaeromyxobacter dehalogenans (strain 2CP-1 / ATCC BAA-258), this protein is Small ribosomal subunit protein bS16.